The following is a 305-amino-acid chain: Olfactory receptor 9G19 (305 aa).

At Met-1–Lys-24 the chain is on the extracellular side. A helical transmembrane segment spans residues Val-25–Ile-45. Residues Met-46–His-55 are Cytoplasmic-facing. Residues Thr-56–Tyr-76 form a helical membrane-spanning segment. Residues Thr-77–Cys-96 lie on the Extracellular side of the membrane. The cysteines at positions 96 and 178 are disulfide-linked. Residues Val-97–Met-117 traverse the membrane as a helical segment. Residues Ala-118–Lys-138 are Cytoplasmic-facing. Residues Leu-139–Thr-159 form a helical membrane-spanning segment. At Lys-160–Ser-204 the chain is on the extracellular side. A helical membrane pass occupies residues Asn-205 to Leu-225. Topologically, residues Arg-226–Ala-236 are cytoplasmic. A helical membrane pass occupies residues Phe-237–Ile-257. The Extracellular portion of the chain corresponds to Tyr-258 to Asp-270. A helical transmembrane segment spans residues Lys-271–Leu-291. Residues Arg-292–Lys-305 are Cytoplasmic-facing.

It belongs to the G-protein coupled receptor 1 family.

The protein resides in the cell membrane. Its function is as follows. Odorant receptor. The chain is Olfactory receptor 9G19 from Mus musculus (Mouse).